The following is a 341-amino-acid chain: MFVDKTLMITGGTGSFGNAVLSRFLKSDIINDIKEIRIFSRDEKKQEDMRIALSNPKLKFYIGDVRNYKSIDEAMRGVDYVFHAAALKQVPTCEFYPMEAINTNVLGAENVLSAAINNKVAKVIVLSTDKAVYPINAMGLSKALMEKLSIAKARMCSQGETVLCVTRYGNVMASRGSVIPLFINQIKQGKELTITEPSMTRFLMSLVDSVDLVLYAFEHGRQGDIFVQKSPASTIEILAKALQEIFGSKNKIRFIGTRHGEKHYESLVSSEDMAKADDLGGYYRIPMDGRDLNYAKYFVEGEKKVALLEDYTSHNTKRLNLEEVKKLLLTLDYIQEELKNA.

This sequence belongs to the polysaccharide synthase family.

It catalyses the reaction UDP-alpha-D-glucose = UDP-alpha-D-galactose. Functionally, epimerizes UDP-galactose to UDP-glucose. This chain is UDP-glucose 4-epimerase (capD), found in Rickettsia akari (strain Hartford).